The following is a 510-amino-acid chain: Serine carboxypeptidase 1 (510 aa).

The signal sequence occupies residues 1-25 (MARRGRRSLASPAVAIALFVFLAYG). Positions 26-36 (GGGGGGGVCEA) are excised as a propeptide. Cystine bridges form between C98–C399, C262–C274, and C297–C366. N154 carries N-linked (GlcNAc...) asparagine glycosylation. S194 is a catalytic residue. N268 is a glycosylation site (N-linked (GlcNAc...) asparagine). Residues 303–362 (IKKVTPANTKLPKSFQHLGTTTKPLAVRTRMHGRAWPLRAPVRAGRVPSWQEFARGSRPS) constitute a propeptide, linker peptide. N418 carries N-linked (GlcNAc...) asparagine glycosylation. Catalysis depends on residues D434 and H487. The Microbody targeting signal signature appears at 508–510 (SKL).

Belongs to the peptidase S10 family.

It carries out the reaction Release of a C-terminal amino acid with broad specificity.. The chain is Serine carboxypeptidase 1 (CBP1) from Oryza sativa subsp. japonica (Rice).